The chain runs to 335 residues: NADH-quinone oxidoreductase subunit H (335 aa).

The next 8 membrane-spanning stretches (helical) occupy residues 12-32 (IIAV…GALL), 81-101 (VIFT…FAVI), 114-134 (IGLL…LFAG), 154-174 (VSYE…VGSF), 187-207 (LWFI…GVAV), 238-258 (FFVG…TLFF), 270-290 (SLAF…FILL), and 307-327 (WKFC…IVLL).

It belongs to the complex I subunit 1 family. As to quaternary structure, NDH-1 is composed of 13 different subunits. Subunits NuoA, H, J, K, L, M, N constitute the membrane sector of the complex.

The protein resides in the cell inner membrane. The catalysed reaction is a quinone + NADH + 5 H(+)(in) = a quinol + NAD(+) + 4 H(+)(out). Functionally, NDH-1 shuttles electrons from NADH, via FMN and iron-sulfur (Fe-S) centers, to quinones in the respiratory chain. The immediate electron acceptor for the enzyme in this species is believed to be ubiquinone. Couples the redox reaction to proton translocation (for every two electrons transferred, four hydrogen ions are translocated across the cytoplasmic membrane), and thus conserves the redox energy in a proton gradient. This subunit may bind ubiquinone. The polypeptide is NADH-quinone oxidoreductase subunit H (Pseudomonas syringae pv. tomato (strain ATCC BAA-871 / DC3000)).